We begin with the raw amino-acid sequence, 274 residues long: NADPH-dependent 7-cyano-7-deazaguanine reductase (274 aa).

Residue 80-82 participates in substrate binding; it reads VES. 82–83 contacts NADPH; it reads SK. C181 serves as the catalytic Thioimide intermediate. Residue D188 is the Proton donor of the active site. 220-221 is a binding site for substrate; it reads HE. 249–250 contributes to the NADPH binding site; it reads RG.

Belongs to the GTP cyclohydrolase I family. QueF type 2 subfamily. Homodimer.

It localises to the cytoplasm. The enzyme catalyses 7-aminomethyl-7-carbaguanine + 2 NADP(+) = 7-cyano-7-deazaguanine + 2 NADPH + 3 H(+). It participates in tRNA modification; tRNA-queuosine biosynthesis. Catalyzes the NADPH-dependent reduction of 7-cyano-7-deazaguanine (preQ0) to 7-aminomethyl-7-deazaguanine (preQ1). This chain is NADPH-dependent 7-cyano-7-deazaguanine reductase, found in Burkholderia thailandensis (strain ATCC 700388 / DSM 13276 / CCUG 48851 / CIP 106301 / E264).